The following is a 413-amino-acid chain: Enhanced ethylene response protein 5 (413 aa).

Positions 216-402 constitute a PCI domain; the sequence is VTYMYYTGRL…KVVVLSKQDP (187 aa).

In terms of assembly, interacts with EIN2 (via C-terminus). May also interact weakly with CSN8. Interacts with DSS1(V), AMPD, SAC3A, SAC3B and At5g61290 (AC Q9FLK4). Interacts with UCH1 and UCH2. Interacts with NUP1, anchoring the TREX-2 complex on the nuclear pore complex. Expressed at low levels in roots, leaves, stems and shoots. Detected in seedlings, roots, leaves and anthers.

The protein localises to the nucleus. Involved in the regulation of ethylene response. Probable TREX-2 component required for nuclear RNA export. The TREX-2 complex (transcription and export complex 2) functions in docking export-competent ribonucleoprotein particles (mRNPs) to the nuclear entrance of the nuclear pore complex (nuclear basket). TREX-2 participates in mRNA export and accurate chromatin positioning in the nucleus by tethering genes to the nuclear periphery. The protein is Enhanced ethylene response protein 5 of Arabidopsis thaliana (Mouse-ear cress).